Here is a 160-residue protein sequence, read N- to C-terminus: uncharacterized protein (160 aa).

Residues 47–67 (LLGGFANVAAILTPLVAVLAY) traverse the membrane as a helical segment.

The protein resides in the membrane. This is an uncharacterized protein from Sinorhizobium fredii (strain NBRC 101917 / NGR234).